The chain runs to 211 residues: Ribosomal RNA small subunit methyltransferase G (211 aa).

S-adenosyl-L-methionine is bound by residues glycine 73, phenylalanine 78, and arginine 141.

Belongs to the methyltransferase superfamily. RNA methyltransferase RsmG family.

It is found in the cytoplasm. It catalyses the reaction guanosine(527) in 16S rRNA + S-adenosyl-L-methionine = N(7)-methylguanosine(527) in 16S rRNA + S-adenosyl-L-homocysteine. In terms of biological role, specifically methylates the N7 position of guanine in position 527 of 16S rRNA. This is Ribosomal RNA small subunit methyltransferase G from Jannaschia sp. (strain CCS1).